The chain runs to 225 residues: Thaumatin-like protein (225 aa).

The signal sequence occupies residues 1–24 (MSTFKSLSLSALLFIAFLFTCARG). 8 cysteine pairs are disulfide-bonded: cysteine 33–cysteine 224, cysteine 74–cysteine 84, cysteine 89–cysteine 95, cysteine 140–cysteine 213, cysteine 146–cysteine 196, cysteine 154–cysteine 164, cysteine 168–cysteine 177, and cysteine 178–cysteine 183. Asparagine 187 carries an N-linked (GlcNAc...) asparagine glycan.

The protein belongs to the thaumatin family. In terms of processing, N-glycosylated. In terms of tissue distribution, woody stem plug.

Its subcellular location is the secreted. Has antifungal activity. This Actinidia deliciosa (Kiwi) protein is Thaumatin-like protein (tlp).